The following is an 87-amino-acid chain: Large ribosomal subunit protein bL31B (87 aa).

It belongs to the bacterial ribosomal protein bL31 family. Type B subfamily. Part of the 50S ribosomal subunit.

The chain is Large ribosomal subunit protein bL31B from Shigella boydii serotype 4 (strain Sb227).